The chain runs to 949 residues: RNA polymerase-associated protein RapA (949 aa).

Residues 164 to 332 form the Helicase ATP-binding domain; it reads EVADRIAPRV…FARLRLLDPN (169 aa). 177 to 184 serves as a coordination point for ATP; that stretch reads DEVGLGKT. A DEAH box motif is present at residues 278–281; that stretch reads DEAH. The 155-residue stretch at 474-628 folds into the Helicase C-terminal domain; it reads RVEWLIDQLK…TCPTGNALQH (155 aa).

Belongs to the SNF2/RAD54 helicase family. RapA subfamily. Interacts with the RNAP. Has a higher affinity for the core RNAP than for the holoenzyme. Its ATPase activity is stimulated by binding to RNAP.

Transcription regulator that activates transcription by stimulating RNA polymerase (RNAP) recycling in case of stress conditions such as supercoiled DNA or high salt concentrations. Probably acts by releasing the RNAP, when it is trapped or immobilized on tightly supercoiled DNA. Does not activate transcription on linear DNA. Probably not involved in DNA repair. In Pseudomonas fluorescens (strain ATCC BAA-477 / NRRL B-23932 / Pf-5), this protein is RNA polymerase-associated protein RapA.